Here is a 274-residue protein sequence, read N- to C-terminus: tRNA-cytidine(32) 2-sulfurtransferase (274 aa).

Residues 40–45 (SGGKDS) carry the PP-loop motif motif. [4Fe-4S] cluster is bound by residues Cys115, Cys118, and Cys206.

Belongs to the TtcA family. In terms of assembly, homodimer. Requires Mg(2+) as cofactor. It depends on [4Fe-4S] cluster as a cofactor.

Its subcellular location is the cytoplasm. The catalysed reaction is cytidine(32) in tRNA + S-sulfanyl-L-cysteinyl-[cysteine desulfurase] + AH2 + ATP = 2-thiocytidine(32) in tRNA + L-cysteinyl-[cysteine desulfurase] + A + AMP + diphosphate + H(+). It functions in the pathway tRNA modification. In terms of biological role, catalyzes the ATP-dependent 2-thiolation of cytidine in position 32 of tRNA, to form 2-thiocytidine (s(2)C32). The sulfur atoms are provided by the cysteine/cysteine desulfurase (IscS) system. This chain is tRNA-cytidine(32) 2-sulfurtransferase, found in Pseudomonas putida (strain W619).